The chain runs to 420 residues: Histidine--tRNA ligase (420 aa).

This sequence belongs to the class-II aminoacyl-tRNA synthetase family. Homodimer.

The protein localises to the cytoplasm. The enzyme catalyses tRNA(His) + L-histidine + ATP = L-histidyl-tRNA(His) + AMP + diphosphate + H(+). The chain is Histidine--tRNA ligase from Mycobacterium marinum (strain ATCC BAA-535 / M).